We begin with the raw amino-acid sequence, 185 residues long: Transcription factor FapR (185 aa).

This sequence belongs to the FapR family.

In terms of biological role, transcriptional factor involved in regulation of membrane lipid biosynthesis by repressing genes involved in fatty acid and phospholipid metabolism. The protein is Transcription factor FapR of Staphylococcus aureus (strain Mu3 / ATCC 700698).